The chain runs to 234 residues: tRNA (guanine-N(1)-)-methyltransferase (234 aa).

Residues glycine 112 and 132–137 (IGDFIL) each bind S-adenosyl-L-methionine.

The protein belongs to the RNA methyltransferase TrmD family. Homodimer.

It localises to the cytoplasm. It catalyses the reaction guanosine(37) in tRNA + S-adenosyl-L-methionine = N(1)-methylguanosine(37) in tRNA + S-adenosyl-L-homocysteine + H(+). In terms of biological role, specifically methylates guanosine-37 in various tRNAs. The polypeptide is tRNA (guanine-N(1)-)-methyltransferase (Campylobacter jejuni (strain RM1221)).